The chain runs to 218 residues: uncharacterized protein (218 aa).

It belongs to the HAD-like hydrolase superfamily.

Its subcellular location is the cytoplasm. The protein localises to the nucleus. This is an uncharacterized protein from Saccharomyces cerevisiae (strain ATCC 204508 / S288c) (Baker's yeast).